Consider the following 279-residue polypeptide: Pantothenate synthetase (279 aa).

ATP is bound at residue 26–33; it reads MGNLHEGH. Catalysis depends on His33, which acts as the Proton donor. A (R)-pantoate-binding site is contributed by Gln57. Beta-alanine is bound at residue Gln57. 144 to 147 is an ATP binding site; it reads GKKD. Gln150 contributes to the (R)-pantoate binding site. ATP is bound by residues Val173 and 181 to 184; that span reads LSSR.

This sequence belongs to the pantothenate synthetase family. Homodimer.

It is found in the cytoplasm. The enzyme catalyses (R)-pantoate + beta-alanine + ATP = (R)-pantothenate + AMP + diphosphate + H(+). The protein operates within cofactor biosynthesis; (R)-pantothenate biosynthesis; (R)-pantothenate from (R)-pantoate and beta-alanine: step 1/1. In terms of biological role, catalyzes the condensation of pantoate with beta-alanine in an ATP-dependent reaction via a pantoyl-adenylate intermediate. This is Pantothenate synthetase from Burkholderia ambifaria (strain ATCC BAA-244 / DSM 16087 / CCUG 44356 / LMG 19182 / AMMD) (Burkholderia cepacia (strain AMMD)).